We begin with the raw amino-acid sequence, 607 residues long: UvrABC system protein C (607 aa).

In terms of domain architecture, GIY-YIG spans aspartate 29 to isoleucine 106. The UVR domain maps to glycine 211–valine 246.

This sequence belongs to the UvrC family. Interacts with UvrB in an incision complex.

Its subcellular location is the cytoplasm. Its function is as follows. The UvrABC repair system catalyzes the recognition and processing of DNA lesions. UvrC both incises the 5' and 3' sides of the lesion. The N-terminal half is responsible for the 3' incision and the C-terminal half is responsible for the 5' incision. The sequence is that of UvrABC system protein C from Desulfitobacterium hafniense (strain Y51).